A 441-amino-acid polypeptide reads, in one-letter code: Plasmepsin VI (441 aa).

At 1-7 the chain is on the cytoplasmic side; sequence MTNFCIK. Residues 8-28 traverse the membrane as a helical; Signal-anchor for type II membrane protein segment; it reads SYLFLYLSFLLFFDIITIFHV. Residues 29–441 lie on the Extracellular side of the membrane; the sequence is SSIRISTVLK…VGVVKSNHNF (413 aa). Residues 109 to 435 form the Peptidase A1 domain; that stretch reads FIGDIEIGNP…DNDHKLVGVV (327 aa). Catalysis depends on residues Asp-127 and Asp-324.

The protein belongs to the peptidase A1 family.

It is found in the membrane. During the development in the mosquito midgut, plays a role in sporozoite egress from oocysts. This is Plasmepsin VI from Plasmodium berghei (strain Anka).